Consider the following 445-residue polypeptide: Argininosuccinate synthase (445 aa).

ATP is bound by residues 17–25 (AFSGGLDTS) and Ala-43. Tyr-99 lines the L-citrulline pocket. 2 residues coordinate ATP: Gly-129 and Thr-131. Residues Thr-131, Asn-135, and Asp-136 each contribute to the L-aspartate site. Asn-135 contacts L-citrulline. Residue Asp-136 participates in ATP binding. Residues Arg-139 and Ser-192 each coordinate L-citrulline. Asp-194 is an ATP binding site. Residues Thr-201, Glu-203, and Glu-280 each contribute to the L-citrulline site.

The protein belongs to the argininosuccinate synthase family. Type 2 subfamily. In terms of assembly, homotetramer.

It is found in the cytoplasm. The enzyme catalyses L-citrulline + L-aspartate + ATP = 2-(N(omega)-L-arginino)succinate + AMP + diphosphate + H(+). Its pathway is amino-acid biosynthesis; L-arginine biosynthesis; L-arginine from L-ornithine and carbamoyl phosphate: step 2/3. The sequence is that of Argininosuccinate synthase from Herminiimonas arsenicoxydans.